We begin with the raw amino-acid sequence, 476 residues long: Ribulose bisphosphate carboxylase large chain (476 aa).

Residues 1–2 (MS) constitute a propeptide that is removed on maturation. Pro-3 carries the post-translational modification N-acetylproline. Lys-14 bears the N6,N6,N6-trimethyllysine mark. Substrate-binding residues include Asn-123 and Thr-173. Lys-175 functions as the Proton acceptor in the catalytic mechanism. Lys-177 contacts substrate. Residues Lys-201, Asp-203, and Glu-204 each contribute to the Mg(2+) site. Position 201 is an N6-carboxylysine (Lys-201). Residue His-294 is the Proton acceptor of the active site. Residues Arg-295, His-327, and Ser-379 each coordinate substrate.

Belongs to the RuBisCO large chain family. Type I subfamily. In terms of assembly, heterohexadecamer of 8 large chains and 8 small chains; disulfide-linked. The disulfide link is formed within the large subunit homodimers. Mg(2+) serves as cofactor. In terms of processing, the disulfide bond which can form in the large chain dimeric partners within the hexadecamer appears to be associated with oxidative stress and protein turnover.

The protein resides in the plastid. It is found in the chloroplast. The enzyme catalyses 2 (2R)-3-phosphoglycerate + 2 H(+) = D-ribulose 1,5-bisphosphate + CO2 + H2O. It catalyses the reaction D-ribulose 1,5-bisphosphate + O2 = 2-phosphoglycolate + (2R)-3-phosphoglycerate + 2 H(+). Functionally, ruBisCO catalyzes two reactions: the carboxylation of D-ribulose 1,5-bisphosphate, the primary event in carbon dioxide fixation, as well as the oxidative fragmentation of the pentose substrate in the photorespiration process. Both reactions occur simultaneously and in competition at the same active site. In Zea mays (Maize), this protein is Ribulose bisphosphate carboxylase large chain.